The following is a 501-amino-acid chain: ATP synthase subunit alpha, chloroplastic (501 aa).

170 to 177 (GDRQTGKT) provides a ligand contact to ATP.

It belongs to the ATPase alpha/beta chains family. In terms of assembly, F-type ATPases have 2 components, CF(1) - the catalytic core - and CF(0) - the membrane proton channel. CF(1) has five subunits: alpha(3), beta(3), gamma(1), delta(1), epsilon(1). CF(0) has four main subunits: a, b, b' and c.

Its subcellular location is the plastid. It is found in the chloroplast thylakoid membrane. The enzyme catalyses ATP + H2O + 4 H(+)(in) = ADP + phosphate + 5 H(+)(out). In terms of biological role, produces ATP from ADP in the presence of a proton gradient across the membrane. The alpha chain is a regulatory subunit. The protein is ATP synthase subunit alpha, chloroplastic of Nephroselmis olivacea (Green alga).